Reading from the N-terminus, the 210-residue chain is ATP-dependent Clp protease proteolytic subunit (210 aa).

S106 functions as the Nucleophile in the catalytic mechanism. The active site involves H131.

It belongs to the peptidase S14 family. As to quaternary structure, fourteen ClpP subunits assemble into 2 heptameric rings which stack back to back to give a disk-like structure with a central cavity, resembling the structure of eukaryotic proteasomes.

It localises to the cytoplasm. It carries out the reaction Hydrolysis of proteins to small peptides in the presence of ATP and magnesium. alpha-casein is the usual test substrate. In the absence of ATP, only oligopeptides shorter than five residues are hydrolyzed (such as succinyl-Leu-Tyr-|-NHMec, and Leu-Tyr-Leu-|-Tyr-Trp, in which cleavage of the -Tyr-|-Leu- and -Tyr-|-Trp bonds also occurs).. In terms of biological role, cleaves peptides in various proteins in a process that requires ATP hydrolysis. Has a chymotrypsin-like activity. Plays a major role in the degradation of misfolded proteins. The polypeptide is ATP-dependent Clp protease proteolytic subunit (Bartonella quintana (strain Toulouse) (Rochalimaea quintana)).